Consider the following 788-residue polypeptide: Endonuclease MutS2 (788 aa).

Residue 332-339 (GPNTGGKT) participates in ATP binding. The Smr domain maps to 713–788 (VDLRGMDAEE…GTGVTVVELK (76 aa)).

Belongs to the DNA mismatch repair MutS family. MutS2 subfamily. In terms of assembly, homodimer. Binds to stalled ribosomes, contacting rRNA.

Its function is as follows. Endonuclease that is involved in the suppression of homologous recombination and thus may have a key role in the control of bacterial genetic diversity. Functionally, acts as a ribosome collision sensor, splitting the ribosome into its 2 subunits. Detects stalled/collided 70S ribosomes which it binds and splits by an ATP-hydrolysis driven conformational change. Acts upstream of the ribosome quality control system (RQC), a ribosome-associated complex that mediates the extraction of incompletely synthesized nascent chains from stalled ribosomes and their subsequent degradation. Probably generates substrates for RQC. The sequence is that of Endonuclease MutS2 from Clostridium botulinum (strain ATCC 19397 / Type A).